The chain runs to 205 residues: Spermatogenesis-associated protein 24 (205 aa).

Residues 17-166 (LALDQLRDVI…QQKQIFRNHM (150 aa)) adopt a coiled-coil conformation. The interval 138–185 (EDILNGKENEIKELQQVISQQKQIFRNHMSDFRIQKQQESYMAQVLDQ) is required for interaction with CBX5 and TBPL1. Residues 180–205 (AQVLDQKHKKASGTRQARSHQHPREK) are disordered. Positions 186–205 (KHKKASGTRQARSHQHPREK) are enriched in basic residues.

It belongs to the SPATA24 family. In terms of assembly, homodimer. Interacts with CBX3, CBX5, GMNN, GTF2B, TBPL1 and the polycomb proteins PHCF2, RNF2 and SCMH1 but not with CBX1 or PCGF2.

The protein resides in the cytoplasm. It is found in the nucleus. Its subcellular location is the nucleolus. It localises to the nucleoplasm. Functionally, binds DNA with high affinity but does not bind to TATA boxes. Synergises with GMNN and TBP in activation of TATA box-containing promoters and with GMNN and TBPL1 in activation of the NF1 TATA-less promoter. May play a role in cytoplasm movement and removal during spermiogenesis. This Homo sapiens (Human) protein is Spermatogenesis-associated protein 24 (SPATA24).